The chain runs to 570 residues: Hydroxylamine reductase (570 aa).

Residues Cys5, Cys8, Cys17, and Cys23 each coordinate [4Fe-4S] cluster. Hybrid [4Fe-2O-2S] cluster-binding residues include His266, Glu290, Cys334, Cys425, Cys453, Cys478, Glu513, and Lys515. Cysteine persulfide is present on Cys425.

Belongs to the HCP family. Requires [4Fe-4S] cluster as cofactor. Hybrid [4Fe-2O-2S] cluster is required as a cofactor.

Its subcellular location is the cytoplasm. The catalysed reaction is A + NH4(+) + H2O = hydroxylamine + AH2 + H(+). In terms of biological role, catalyzes the reduction of hydroxylamine to form NH(3) and H(2)O. The polypeptide is Hydroxylamine reductase (Clostridium botulinum (strain 657 / Type Ba4)).